A 55-amino-acid polypeptide reads, in one-letter code: Large ribosomal subunit protein bL33 (55 aa).

This sequence belongs to the bacterial ribosomal protein bL33 family.

The polypeptide is Large ribosomal subunit protein bL33 (Buchnera aphidicola subsp. Acyrthosiphon pisum (strain 5A)).